The primary structure comprises 93 residues: MESAQAVAEPLDLVRLSLDEIVYVKLRGDRELNGRLHAYDEHLNMVLGDAEEIVTIFDDEETDKDKALKTIRKHYEMLFVRGDSVILIAPPRN.

Residues 9–93 (EPLDLVRLSL…SVILIAPPRN (85 aa)) enclose the Sm domain. Ser-84 carries the post-translational modification Phosphoserine.

It belongs to the snRNP Sm proteins family. As to quaternary structure, component of the heptameric LSM1-LSM7 complex that forms a seven-membered ring structure with a donut shape. The LSm subunits are arranged in the order lsm1, lsm2, lsm3, lsm6, lsm5, lsm7 and lsm4. Component of the heptameric LSM2-LSM8 complex that forms a seven-membered ring structure with a donut shape. The LSm subunits are arranged in the order lsm8, lsm2, lsm3, lsm6, lsm5, lsm7 and lsm4.

It is found in the nucleus. The protein localises to the cytoplasm. Functionally, component of LSm protein complexes, which are involved in RNA processing and may function in a chaperone-like manner. Component of the cytoplasmic LSM1-LSM7 complex which is involved in mRNA degradation by activating the decapping step. The LSM1-LSM7 complex loads onto the 3'-end of single stranded RNA. Component of the nuclear LSM2-LSM8 complex, which is involved in spliceosome assembly. The LSM2-LSM8 complex plays a role in the biogenesis of the spliceosomal U4/U6-U5 tri-snRNP complex by accelerating prp24-mediated annealing of U4/U6 di-snRNA. The LSM2-LSM8 complex binds U6 snRNA terminating with a cyclic 2',3' phosphate group; RNA with an unmodified 3' hydroxyl or non-cyclic 3' phosphate is bound less tightly. The sequence is that of LSM complex subunit lsm3 (lsm3) from Schizosaccharomyces pombe (strain 972 / ATCC 24843) (Fission yeast).